The primary structure comprises 188 residues: CASP-like protein 4B3 (188 aa).

The segment at 1–21 is disordered; the sequence is MSFSPASSEPHDAPAAAGSSV. The Cytoplasmic segment spans residues 1-42; that stretch reads MSFSPASSEPHDAPAAAGSSVPASRSIAERWKMEAAPIRARL. The chain crosses the membrane as a helical span at residues 43 to 63; sequence LLRAFAWLFSLLALVVMATDV. The Extracellular segment spans residues 64–76; that stretch reads HGRGGAQDFSTYP. Residues 77-97 traverse the membrane as a helical segment; the sequence is EYNYCLGMSIIALLYATAQLV. The Cytoplasmic segment spans residues 98 to 114; sequence RDAHRLSSGRDLVAGRK. The chain crosses the membrane as a helical span at residues 115–135; that stretch reads AAAVVDFAGDQVVAYSLISGL. Topologically, residues 136 to 156 are extracellular; it reads SAAAPVTDYMRQATDNLFNDS. An N-linked (GlcNAc...) asparagine glycan is attached at Asn154. Residues 157–177 traverse the membrane as a helical segment; the sequence is AAAAISLAFFAFLAISLSALI. Over 178–188 the chain is Cytoplasmic; sequence SGYNLSLEAIV.

This sequence belongs to the Casparian strip membrane proteins (CASP) family. As to quaternary structure, homodimer and heterodimers.

The protein localises to the cell membrane. The sequence is that of CASP-like protein 4B3 from Hordeum vulgare subsp. vulgare (Domesticated barley).